Here is a 131-residue protein sequence, read N- to C-terminus: MFSDNSHCPDCGQQWFPSLELGHWLYQTELVENECYQVFLDRINRADYCPECYPDNPANRSLVLPWSFPLEWAPQNLTRWTFEKACHPFLLGPPLVRKRIHDSRVAGFNPALQLILTRTDKTLNKKLGQNK.

The sequence is that of Torsin-1A-interacting protein 2, isoform IFRG15 (TOR1AIP2) from Homo sapiens (Human).